The following is a 556-amino-acid chain: Arginine--tRNA ligase (556 aa).

The 'HIGH' region signature appears at 132 to 142 (ANPTGPIHLGG).

This sequence belongs to the class-I aminoacyl-tRNA synthetase family. In terms of assembly, monomer.

It is found in the cytoplasm. The catalysed reaction is tRNA(Arg) + L-arginine + ATP = L-arginyl-tRNA(Arg) + AMP + diphosphate. This is Arginine--tRNA ligase from Kocuria rhizophila (strain ATCC 9341 / DSM 348 / NBRC 103217 / DC2201).